The sequence spans 897 residues: Protein translocase subunit SecA (897 aa).

ATP contacts are provided by residues Gln-87, 105-109 (GEGKT), and Asp-512. The segment at 846 to 897 (EEEQQKQARKKMVFNLVDEDETSEPSKSKKLAGRNEPCPCGSGKKYKKCCGK) is disordered. Positions 883, 885, 894, and 895 each coordinate Zn(2+).

The protein belongs to the SecA family. Monomer and homodimer. Part of the essential Sec protein translocation apparatus which comprises SecA, SecYEG and auxiliary proteins SecDF-YajC and YidC. Zn(2+) serves as cofactor.

The protein localises to the cell inner membrane. It localises to the cytoplasm. The enzyme catalyses ATP + H2O + cellular proteinSide 1 = ADP + phosphate + cellular proteinSide 2.. Its function is as follows. Part of the Sec protein translocase complex. Interacts with the SecYEG preprotein conducting channel. Has a central role in coupling the hydrolysis of ATP to the transfer of proteins into and across the cell membrane, serving as an ATP-driven molecular motor driving the stepwise translocation of polypeptide chains across the membrane. In Geobacter sulfurreducens (strain ATCC 51573 / DSM 12127 / PCA), this protein is Protein translocase subunit SecA.